The primary structure comprises 216 residues: Protein-L-isoaspartate O-methyltransferase (216 aa).

Ser-63 is a catalytic residue.

The protein belongs to the methyltransferase superfamily. L-isoaspartyl/D-aspartyl protein methyltransferase family.

It is found in the cytoplasm. The enzyme catalyses [protein]-L-isoaspartate + S-adenosyl-L-methionine = [protein]-L-isoaspartate alpha-methyl ester + S-adenosyl-L-homocysteine. Catalyzes the methyl esterification of L-isoaspartyl residues in peptides and proteins that result from spontaneous decomposition of normal L-aspartyl and L-asparaginyl residues. It plays a role in the repair and/or degradation of damaged proteins. This chain is Protein-L-isoaspartate O-methyltransferase, found in Rhodopseudomonas palustris (strain BisB18).